The primary structure comprises 554 residues: Glutamine--tRNA ligase (554 aa).

A 'HIGH' region motif is present at residues 34 to 44; sequence PEPNGYLHIGH. ATP-binding positions include 35–37 and 41–47; these read EPN and HIGHAKS. 2 residues coordinate L-glutamine: Asp67 and Tyr212. Residues Thr231, 261–262, and 269–271 each bind ATP; these read RL and MSK. The 'KMSKS' region motif lies at 268 to 272; sequence VMSKR. Positions 317-324 are interaction with tRNA; sequence TKQDNTIE.

It belongs to the class-I aminoacyl-tRNA synthetase family. Monomer.

The protein localises to the cytoplasm. The enzyme catalyses tRNA(Gln) + L-glutamine + ATP = L-glutaminyl-tRNA(Gln) + AMP + diphosphate. The polypeptide is Glutamine--tRNA ligase (Escherichia coli O127:H6 (strain E2348/69 / EPEC)).